The primary structure comprises 452 residues: Exoglucanase 1 (452 aa).

Positions 1-18 are cleaved as a signal peptide; it reads MFSKFALTGSLLAGAVNA. Residue asparagine 75 is glycosylated (N-linked (GlcNAc...) asparagine). Glutamate 230 (nucleophile) is an active-site residue. The active-site Proton donor is the glutamate 235. N-linked (GlcNAc...) asparagine glycans are attached at residues asparagine 335 and asparagine 360.

Belongs to the glycosyl hydrolase 7 (cellulase C) family.

It carries out the reaction Hydrolysis of (1-&gt;4)-beta-D-glucosidic linkages in cellulose and cellotetraose, releasing cellobiose from the non-reducing ends of the chains.. The biological conversion of cellulose to glucose generally requires three types of hydrolytic enzymes: (1) Endoglucanases which cut internal beta-1,4-glucosidic bonds; (2) Exocellobiohydrolases that cut the disaccharide cellobiose from the non-reducing end of the cellulose polymer chain; (3) Beta-1,4-glucosidases which hydrolyze the cellobiose and other short cello-oligosaccharides to glucose. This is Exoglucanase 1 (CBH-1) from Cryphonectria parasitica (Chestnut blight fungus).